The sequence spans 268 residues: 4-hydroxy-tetrahydrodipicolinate reductase (268 aa).

Residues 10–15, Asp36, 99–101, and 123–126 contribute to the NAD(+) site; these read GASGRM, GTT, and APNM. His156 acts as the Proton donor/acceptor in catalysis. Residue His157 participates in (S)-2,3,4,5-tetrahydrodipicolinate binding. Lys160 acts as the Proton donor in catalysis. 166–167 serves as a coordination point for (S)-2,3,4,5-tetrahydrodipicolinate; the sequence is GT.

The protein belongs to the DapB family.

The protein localises to the cytoplasm. It catalyses the reaction (S)-2,3,4,5-tetrahydrodipicolinate + NAD(+) + H2O = (2S,4S)-4-hydroxy-2,3,4,5-tetrahydrodipicolinate + NADH + H(+). The enzyme catalyses (S)-2,3,4,5-tetrahydrodipicolinate + NADP(+) + H2O = (2S,4S)-4-hydroxy-2,3,4,5-tetrahydrodipicolinate + NADPH + H(+). Its pathway is amino-acid biosynthesis; L-lysine biosynthesis via DAP pathway; (S)-tetrahydrodipicolinate from L-aspartate: step 4/4. Functionally, catalyzes the conversion of 4-hydroxy-tetrahydrodipicolinate (HTPA) to tetrahydrodipicolinate. This chain is 4-hydroxy-tetrahydrodipicolinate reductase, found in Herminiimonas arsenicoxydans.